The chain runs to 1183 residues: Probable RNA-dependent RNA polymerase 4 (1183 aa).

It belongs to the RdRP family. Expressed in shoot apical meristem (SAM) and panicles.

It catalyses the reaction RNA(n) + a ribonucleoside 5'-triphosphate = RNA(n+1) + diphosphate. In terms of biological role, probably involved in the RNA silencing pathway and required for the generation of small interfering RNAs (siRNAs). In Oryza sativa subsp. japonica (Rice), this protein is Probable RNA-dependent RNA polymerase 4 (RDR4).